Consider the following 300-residue polypeptide: GTPase Era (300 aa).

The 172-residue stretch at 5–176 (HSGFVCLVGR…IDVLAAALPA (172 aa)) folds into the Era-type G domain. The G1 stretch occupies residues 13-20 (GRPNTGKS). 13-20 (GRPNTGKS) is a binding site for GTP. Residues 39–43 (QTTRH) are G2. The interval 60–63 (DTPG) is G3. GTP contacts are provided by residues 60 to 64 (DTPGL) and 125 to 128 (TKID). The segment at 125–128 (TKID) is G4. The tract at residues 155–157 (VSA) is G5. A KH type-2 domain is found at 207-286 (VRDELPHSLA…YLDLRVKVAK (80 aa)).

It belongs to the TRAFAC class TrmE-Era-EngA-EngB-Septin-like GTPase superfamily. Era GTPase family. In terms of assembly, monomer.

The protein resides in the cell envelope. It localises to the secreted. It is found in the cell wall. Exhibits GTPase activity. Binds RNA but is probably not involved in ribosome assembly in mycobacteria. The chain is GTPase Era from Mycobacterium bovis (strain ATCC BAA-935 / AF2122/97).